The primary structure comprises 275 residues: Formamidopyrimidine-DNA glycosylase (275 aa).

P2 serves as the catalytic Schiff-base intermediate with DNA. E3 (proton donor) is an active-site residue. The active-site Proton donor; for beta-elimination activity is K58. DNA contacts are provided by H93, R111, and R156. The FPG-type zinc-finger motif lies at 241–275; it reads FVYDRAGQPCRVCGTPIRQIVQGQRSTYYCPTCQR. R265 acts as the Proton donor; for delta-elimination activity in catalysis.

Belongs to the FPG family. In terms of assembly, monomer. It depends on Zn(2+) as a cofactor.

The catalysed reaction is Hydrolysis of DNA containing ring-opened 7-methylguanine residues, releasing 2,6-diamino-4-hydroxy-5-(N-methyl)formamidopyrimidine.. It catalyses the reaction 2'-deoxyribonucleotide-(2'-deoxyribose 5'-phosphate)-2'-deoxyribonucleotide-DNA = a 3'-end 2'-deoxyribonucleotide-(2,3-dehydro-2,3-deoxyribose 5'-phosphate)-DNA + a 5'-end 5'-phospho-2'-deoxyribonucleoside-DNA + H(+). Its function is as follows. Involved in base excision repair of DNA damaged by oxidation or by mutagenic agents. Acts as a DNA glycosylase that recognizes and removes damaged bases. Has a preference for oxidized purines, such as 7,8-dihydro-8-oxoguanine (8-oxoG). Has AP (apurinic/apyrimidinic) lyase activity and introduces nicks in the DNA strand. Cleaves the DNA backbone by beta-delta elimination to generate a single-strand break at the site of the removed base with both 3'- and 5'-phosphates. This is Formamidopyrimidine-DNA glycosylase from Burkholderia cenocepacia (strain ATCC BAA-245 / DSM 16553 / LMG 16656 / NCTC 13227 / J2315 / CF5610) (Burkholderia cepacia (strain J2315)).